Consider the following 262-residue polypeptide: uncharacterized protein (262 aa).

7 consecutive transmembrane segments (helical) span residues 42 to 62 (IAKFNTIMYLVPYIITYTVLN), 71 to 91 (IINIVYLFVNVISGLFHLLYF), 115 to 135 (IGLAIVSFVYQLSMYIIMELI), 145 to 165 (VVSYLIKFIILTLYHSFCCFN), 185 to 205 (LWAYYLGYGTIASLMYIYSNH), 206 to 226 (PLMIYTYNIYMSILIILPFMI), and 235 to 255 (AYPSINLKIFSIIVGYFNYAI).

Its subcellular location is the membrane. This is an uncharacterized protein from Acanthamoeba polyphaga mimivirus (APMV).